The sequence spans 150 residues: Small ribosomal subunit protein uS11 (150 aa).

The interval 126 to 150 is disordered; the sequence is GRIEDVTPTPSDSTRRKGGRRGRRL. Residues 141–150 show a composition bias toward basic residues; that stretch reads RKGGRRGRRL.

This sequence belongs to the universal ribosomal protein uS11 family. As to quaternary structure, component of the small ribosomal subunit (SSU). Mature N.crassa ribosomes consist of a small (40S) and a large (60S) subunit. The 40S small subunit contains 1 molecule of ribosomal RNA (18S rRNA) and at least 32 different proteins. The large 60S subunit contains 3 rRNA molecules (26S, 5.8S and 5S rRNA) and at least 42 different proteins.

It localises to the cytoplasm. Its function is as follows. Component of the ribosome, a large ribonucleoprotein complex responsible for the synthesis of proteins in the cell. The small ribosomal subunit (SSU) binds messenger RNAs (mRNAs) and translates the encoded message by selecting cognate aminoacyl-transfer RNA (tRNA) molecules. The large subunit (LSU) contains the ribosomal catalytic site termed the peptidyl transferase center (PTC), which catalyzes the formation of peptide bonds, thereby polymerizing the amino acids delivered by tRNAs into a polypeptide chain. The nascent polypeptides leave the ribosome through a tunnel in the LSU and interact with protein factors that function in enzymatic processing, targeting, and the membrane insertion of nascent chains at the exit of the ribosomal tunnel. uS11 is involved in nucleolar processing of pre-18S ribosomal RNA and ribosome assembly. The chain is Small ribosomal subunit protein uS11 (rps-14) from Neurospora crassa (strain ATCC 24698 / 74-OR23-1A / CBS 708.71 / DSM 1257 / FGSC 987).